A 198-amino-acid chain; its full sequence is Undecaprenyl phosphate transporter A (198 aa).

The next 5 membrane-spanning stretches (helical) occupy residues 15 to 35 (MGYA…EIVL), 47 to 67 (IGFI…QIFI), 107 to 127 (VVFS…PAGI), 135 to 155 (FVVL…YLGI), and 169 to 189 (GTYT…YFVI).

This sequence belongs to the DedA family.

It is found in the cell membrane. Functionally, flippase that catalyzes the transport of undecaprenyl phosphate (UndP) across the cytoplasmic membrane, from the external side to the cytoplasmic side. Is involved in UndP recycling during peptidoglycan synthesis. This is Undecaprenyl phosphate transporter A from Bacillus subtilis (strain 168).